A 325-amino-acid chain; its full sequence is Probable cell division protein WhiA (325 aa).

Positions 280–313 (SLKELGNMLEKPLGKSGVNHRLRKIDKIAEELRK) form a DNA-binding region, H-T-H motif.

The protein belongs to the WhiA family.

In terms of biological role, involved in cell division and chromosome segregation. This chain is Probable cell division protein WhiA, found in Caldicellulosiruptor bescii (strain ATCC BAA-1888 / DSM 6725 / KCTC 15123 / Z-1320) (Anaerocellum thermophilum).